We begin with the raw amino-acid sequence, 361 residues long: Histidinol-phosphate aminotransferase (361 aa).

The residue at position 219 (K219) is an N6-(pyridoxal phosphate)lysine.

The protein belongs to the class-II pyridoxal-phosphate-dependent aminotransferase family. Histidinol-phosphate aminotransferase subfamily. As to quaternary structure, homodimer. It depends on pyridoxal 5'-phosphate as a cofactor.

The catalysed reaction is L-histidinol phosphate + 2-oxoglutarate = 3-(imidazol-4-yl)-2-oxopropyl phosphate + L-glutamate. Its pathway is amino-acid biosynthesis; L-histidine biosynthesis; L-histidine from 5-phospho-alpha-D-ribose 1-diphosphate: step 7/9. The polypeptide is Histidinol-phosphate aminotransferase (Acinetobacter baumannii (strain ATCC 17978 / DSM 105126 / CIP 53.77 / LMG 1025 / NCDC KC755 / 5377)).